Here is a 257-residue protein sequence, read N- to C-terminus: Protein THYLAKOID ASSEMBLY 8-like, chloroplastic (257 aa).

The transit peptide at 1–55 (MTAIRVCSRKFPTFASIFFQNITRNPSIHRISFSNLKPKTLLHPIPPKPFTVFVS) directs the protein to the chloroplast. PPR repeat units lie at residues 142–176 (DVFMYKDLIVSLAKSKRMDEAMALWEKMKKENLFP) and 177–211 (DSQTYTEVIRGFLRDGCPADAMNVYEDMLKSPDPP).

This sequence belongs to the PPR family. P subfamily.

The protein localises to the plastid. It localises to the chloroplast. Its function is as follows. Binds weakly to specific single strand RNA (ssRNA). The protein is Protein THYLAKOID ASSEMBLY 8-like, chloroplastic of Arabidopsis thaliana (Mouse-ear cress).